A 268-amino-acid polypeptide reads, in one-letter code: tRNA pseudouridine synthase A (268 aa).

Asp-52 serves as the catalytic Nucleophile. Tyr-113 is a substrate binding site.

It belongs to the tRNA pseudouridine synthase TruA family. Homodimer.

The enzyme catalyses uridine(38/39/40) in tRNA = pseudouridine(38/39/40) in tRNA. Its function is as follows. Formation of pseudouridine at positions 38, 39 and 40 in the anticodon stem and loop of transfer RNAs. This Chlamydia felis (strain Fe/C-56) (Chlamydophila felis) protein is tRNA pseudouridine synthase A.